The chain runs to 1452 residues: CLIP-associating protein 1 (1452 aa).

HEAT repeat units lie at residues 68–87 (LLGMDILSALVTRLQDRFRS), 88–124 (QIGTVLPSLMDRLGDAKDSVREQDQNLLIKIMEQASN), and 163–200 (LTLSKIVPHICNLLGDPNSQVRDAAINCLVEIYRHVGE). Residues 239 to 299 (KNFDDEDSVD…GTAKEGAGGV (61 aa)) form a disordered region. Over residues 253–267 (SSASSSASSKAPQAA) the composition is skewed to low complexity. HEAT repeat units lie at residues 407 to 442 (HGAEAIMPTVFNLVPNSAKIMATSGVVAIRLIIRQT) and 443 to 479 (HVPRLIPIITSNCTSKSVAVRRRCYEFLDLLLQEWQT). 2 disordered regions span residues 545 to 735 (SDSI…GISQ) and 771 to 792 (YGMYSDDDANSDASSACSERSY). Over residues 550–569 (SLPQSDRSSSSSQESLNRPL) the composition is skewed to low complexity. The segment covering 573–597 (RSPTGSTVSRASTATSKSTPGSLQR) has biased composition (polar residues). 3 stretches are compositionally biased toward low complexity: residues 606-621 (AATCAKSKATSGASAA), 645-659 (QSSGSTTSTASTPAD), and 668-682 (VVSQSQPGSRSSSPG). The span at 715 to 724 (QGCSRETSPS) shows a compositional bias: polar residues. Residues 781–792 (SDASSACSERSY) show a composition bias toward low complexity. Residues 926-963 (QQFNILMRFIVDQTQTPNLKVKVAILKYIESLARQMDP) form an HEAT 6 repeat. The segment at 1033–1076 (LKNSSNSSMGSPSNTIGRTPSRHSSSRASPLTSPTNCSHGGLSP) is disordered. The span at 1034-1046 (KNSSNSSMGSPSN) shows a compositional bias: low complexity. Residues 1058–1070 (SRASPLTSPTNCS) are compositionally biased toward polar residues. HEAT repeat units lie at residues 1256-1293 (EHFKTILLLLLETLGDKDHAIRALALRVLREILRNQPA) and 1374-1411 (QILPDIIPGLLQGYDNTESSVRKASVFCLVAIYSVIGE).

It belongs to the CLASP family. In terms of assembly, interacts (via C-terminus) with clip1/clip-170, and cenpe.

It localises to the cytoplasm. Its subcellular location is the cytoskeleton. The protein localises to the microtubule organizing center. It is found in the centrosome. The protein resides in the chromosome. It localises to the centromere. Its subcellular location is the kinetochore. The protein localises to the spindle. It is found in the golgi apparatus. The protein resides in the trans-Golgi network. Its function is as follows. Microtubule plus-end tracking protein that promotes the stabilization of dynamic microtubules during anaphase. Plays a crucial role in chromatin-induced microtubule formation. May also act at microtubule minus ends. May be involved in the nucleation of noncentrosomal microtubules originating from the trans-Golgi network (TGN). The chain is CLIP-associating protein 1 from Xenopus tropicalis (Western clawed frog).